The primary structure comprises 224 residues: UPF0758 protein Pmen_4376 (224 aa).

One can recognise an MPN domain in the interval 102 to 224; the sequence is ALESPQAVRD…PLSMAELGWM (123 aa). The Zn(2+) site is built by H173, H175, and D186. The short motif at 173–186 is the JAMM motif element; the sequence is HNHPSGVCEPSQAD.

Belongs to the UPF0758 family.

This chain is UPF0758 protein Pmen_4376, found in Ectopseudomonas mendocina (strain ymp) (Pseudomonas mendocina).